A 223-amino-acid polypeptide reads, in one-letter code: Proteinase inhibitor type-2 TR8 (223 aa).

Residues 1–24 form the signal peptide; that stretch reads MAIYKVALLLLFGMILLASDFEHA. Repeat copies occupy residues 24–81, 88–145, and 152–209. 8 disulfides stabilise this stretch: cysteine 27-cysteine 120, cysteine 31-cysteine 116, cysteine 40-cysteine 126, cysteine 52-cysteine 95, cysteine 55-cysteine 73, cysteine 56-cysteine 91, cysteine 62-cysteine 104, and cysteine 119-cysteine 137.

This sequence belongs to the protease inhibitor I20 (potato type II proteinase inhibitor) family.

The chain is Proteinase inhibitor type-2 TR8 (ARPI) from Solanum lycopersicum (Tomato).